Here is a 315-residue protein sequence, read N- to C-terminus: tRNA dimethylallyltransferase (315 aa).

Residue 15–22 (GPTACGKS) participates in ATP binding. Substrate is bound at residue 17 to 22 (TACGKS). 2 interaction with substrate tRNA regions span residues 40–43 (DSAL) and 162–166 (QRLIR).

This sequence belongs to the IPP transferase family. Monomer. It depends on Mg(2+) as a cofactor.

The catalysed reaction is adenosine(37) in tRNA + dimethylallyl diphosphate = N(6)-dimethylallyladenosine(37) in tRNA + diphosphate. In terms of biological role, catalyzes the transfer of a dimethylallyl group onto the adenine at position 37 in tRNAs that read codons beginning with uridine, leading to the formation of N6-(dimethylallyl)adenosine (i(6)A). The polypeptide is tRNA dimethylallyltransferase (Buchnera aphidicola subsp. Acyrthosiphon pisum (strain APS) (Acyrthosiphon pisum symbiotic bacterium)).